Consider the following 192-residue polypeptide: Fe/S biogenesis protein NfuA (192 aa).

2 residues coordinate [4Fe-4S] cluster: cysteine 150 and cysteine 153.

It belongs to the NfuA family. In terms of assembly, homodimer. The cofactor is [4Fe-4S] cluster.

Functionally, involved in iron-sulfur cluster biogenesis. Binds a 4Fe-4S cluster, can transfer this cluster to apoproteins, and thereby intervenes in the maturation of Fe/S proteins. Could also act as a scaffold/chaperone for damaged Fe/S proteins. This is Fe/S biogenesis protein NfuA from Buchnera aphidicola subsp. Acyrthosiphon pisum (strain 5A).